The chain runs to 457 residues: ATP synthase subunit beta (457 aa).

Residue 147 to 154 (GGAGVGKT) participates in ATP binding.

Belongs to the ATPase alpha/beta chains family. F-type ATPases have 2 components, CF(1) - the catalytic core - and CF(0) - the membrane proton channel. CF(1) has five subunits: alpha(3), beta(3), gamma(1), delta(1), epsilon(1). CF(0) has three main subunits: a(1), b(2) and c(9-12). The alpha and beta chains form an alternating ring which encloses part of the gamma chain. CF(1) is attached to CF(0) by a central stalk formed by the gamma and epsilon chains, while a peripheral stalk is formed by the delta and b chains.

The protein resides in the cell inner membrane. The enzyme catalyses ATP + H2O + 4 H(+)(in) = ADP + phosphate + 5 H(+)(out). Produces ATP from ADP in the presence of a proton gradient across the membrane. The catalytic sites are hosted primarily by the beta subunits. The polypeptide is ATP synthase subunit beta (Histophilus somni (strain 129Pt) (Haemophilus somnus)).